Here is a 505-residue protein sequence, read N- to C-terminus: uncharacterized protein (505 aa).

A signal peptide spans 1–19 (MILFTAIILVASVVHVVVS). Topologically, residues 20–483 (SPQQCYYCVE…EQPNSAPRGE (464 aa)) are extracellular. Residues 484–504 (IHQLFRCTFVAVFIVFACFIV) traverse the membrane as a helical segment. A topological domain (cytoplasmic) is located at residue Cys505.

In terms of tissue distribution, component of the acid-insoluble and acid-soluble organic matrix of the aragonitic skeleton (at protein level).

It is found in the membrane. This is an uncharacterized protein from Acropora millepora (Staghorn coral).